The primary structure comprises 600 residues: Pyranose dehydrogenase 3 (600 aa).

The N-terminal stretch at Met1–Gly25 is a signal peptide. Residues Asn99 and Asn114 are each glycosylated (N-linked (GlcNAc...) asparagine). The residue at position 127 (His127) is a Tele-8alpha-FAD histidine. N-linked (GlcNAc...) asparagine glycosylation is found at Asn173, Asn199, Asn275, Asn342, Asn399, and Asn507. His535 serves as the catalytic Proton acceptor. Asn546 is a glycosylation site (N-linked (GlcNAc...) asparagine). His579 is a catalytic residue.

This sequence belongs to the GMC oxidoreductase family. Monomer. FAD is required as a cofactor. Post-translationally, N-glycosylated.

It localises to the secreted. The catalysed reaction is pyranose + acceptor = pyranos-2-ulose + reduced acceptor.. The enzyme catalyses pyranose + acceptor = pyranos-3-ulose + reduced acceptor.. It catalyses the reaction pyranose + acceptor = pyranos-2,3-diulose + reduced acceptor.. It carries out the reaction a pyranoside + acceptor = a pyranosid-3-ulose + reduced acceptor.. The catalysed reaction is a pyranoside + acceptor = a pyranosid-3,4-diulose + reduced acceptor.. In terms of biological role, catalyzes the single-oxidation or sequential double oxidation reaction of carbohydrates primarily at carbon-2 and/or carbon-3 with the concomitant reduction of the flavin. The enzyme exhibits a broad sugar substrate specificity, oxidizing different aldopyranoses to the corresponding C-1, C-2, C-3 or C-1,2, C-2,3 and C-3,4 (di)dehydro sugars with substrate-specific regioselectivity. Accepts only a narrow range of electron acceptors such as substituted benzoquinones and complexed metal ions and reacts extremely slowly with O(2) as acceptor. May play a role in the natural recycling of plant matter by oxidizing all major monosaccharides in lignocellulose and by reducing quinone compounds or reactive radical species generated during lignin depolymerization. This Leucoagaricus meleagris (Western flat-topped agaric) protein is Pyranose dehydrogenase 3.